The primary structure comprises 155 residues: SsrA-binding protein (155 aa).

The protein belongs to the SmpB family.

The protein localises to the cytoplasm. Its function is as follows. Required for rescue of stalled ribosomes mediated by trans-translation. Binds to transfer-messenger RNA (tmRNA), required for stable association of tmRNA with ribosomes. tmRNA and SmpB together mimic tRNA shape, replacing the anticodon stem-loop with SmpB. tmRNA is encoded by the ssrA gene; the 2 termini fold to resemble tRNA(Ala) and it encodes a 'tag peptide', a short internal open reading frame. During trans-translation Ala-aminoacylated tmRNA acts like a tRNA, entering the A-site of stalled ribosomes, displacing the stalled mRNA. The ribosome then switches to translate the ORF on the tmRNA; the nascent peptide is terminated with the 'tag peptide' encoded by the tmRNA and targeted for degradation. The ribosome is freed to recommence translation, which seems to be the essential function of trans-translation. The polypeptide is SsrA-binding protein (Bacillus cereus (strain B4264)).